The sequence spans 387 residues: N-acetyldiaminopimelate deacetylase (387 aa).

Aspartate 75 is a catalytic residue. The active-site Proton acceptor is glutamate 134.

It belongs to the peptidase M20A family. N-acetyldiaminopimelate deacetylase subfamily.

The catalysed reaction is N-acetyl-(2S,6S)-2,6-diaminopimelate + H2O = (2S,6S)-2,6-diaminopimelate + acetate. The protein operates within amino-acid biosynthesis; L-lysine biosynthesis via DAP pathway; LL-2,6-diaminopimelate from (S)-tetrahydrodipicolinate (acetylase route): step 3/3. Its function is as follows. Catalyzes the conversion of N-acetyl-diaminopimelate to diaminopimelate and acetate. The protein is N-acetyldiaminopimelate deacetylase of Leuconostoc citreum (strain KM20).